A 143-amino-acid chain; its full sequence is MLTPKRVKWRRQHRPDRAGKAKGGTKIQFGDLALQSLDVAWISSRQIEAARIAMTRHVKRGGKVWIRIFPDRPITAKPAETRMGSGKGSPEYWVAVVKPGRIMFEIAGVPEETAREALRLASHKLPCRTKIVKRQEVGEAGEG.

Residues 1–14 (MLTPKRVKWRRQHR) are compositionally biased toward basic residues. A disordered region spans residues 1–23 (MLTPKRVKWRRQHRPDRAGKAKG).

Belongs to the universal ribosomal protein uL16 family. As to quaternary structure, part of the 50S ribosomal subunit.

In terms of biological role, binds 23S rRNA and is also seen to make contacts with the A and possibly P site tRNAs. In Desulforudis audaxviator (strain MP104C), this protein is Large ribosomal subunit protein uL16.